The primary structure comprises 78 residues: Antimicrobial peptide marcin-18 (78 aa).

The first 23 residues, 1 to 23 (MQFKKQLMVIFLAYFLVVNESEA), serve as a signal peptide directing secretion. At R41 the chain carries Arginine amide. Positions 42 to 78 (RKNQRSRSIMKRDLENLFDPYQRNLELDRLLKQLPNY) are excised as a propeptide.

It belongs to the non-disulfide-bridged peptide (NDBP) superfamily. Medium-length antimicrobial peptide (group 3) family. As to expression, expressed by the venom gland.

The protein resides in the secreted. It localises to the target cell membrane. Its function is as follows. Antimicrobial peptide with potent activity against bacteria. Acts by fastly disrupting the bacterial membrane. Shows activity against Gram-positive bacteria S.aureus (MIC=1.5-2.9 uM) and S.epidermidis (MIC=2.9 uM), M.luteus (MIC=23.4 uM), B.thuringiensis (MIC=2.9 uM), B.subtilis (MIC=2.9 uM) and Gram-negative bacteria E.coli (MIC=5.9-11.7 uM) and P.aeruginosa (MIC=5.9 uM), as well as against penicillin (MIC=2.9 uM) and methicillin (MIC=1.5-2.9 uM) resistant bacteria. Antibiotic activity is not affected by major negatively charged components of the prokaryotic cell wall (e.g. lipopolysaccharides and lipoteichoic acid). In vivo, in a mouse model of lethal peritonitis, shows potent antibiotic activity without cytotoxicity, improving the survival rate. The protein is Antimicrobial peptide marcin-18 of Olivierus martensii (Manchurian scorpion).